A 149-amino-acid chain; its full sequence is Tetracenomycin polyketide synthase protein TcmJ (149 aa).

Residues 51–117 form the Cupin type-2 domain; sequence HIELAPGESV…NRGNVPARVV (67 aa). Residues 127–149 are disordered; the sequence is PELGHVDTEPVPNPAAAPPKVGG.

The tetracenomycin polyketide synthase (TCM PKS) is composed of a ketosynthase complex (TcmKL), an acyl carrier protein (TcmM), a cyclase (TcmN) and a probable second cyclase (TcmJ).

It catalyses the reaction 10 malonyl-CoA + 8 H(+) = tetracenomycin F2 + 10 CO2 + 10 CoA + 2 H2O. Its pathway is antibiotic biosynthesis; tetracenomycin C biosynthesis. Involved in the biosynthesis of tetracenomycin C (TCM C). Part of a type II polyketide synthase (PKS) that catalyzes the synthesis of tetracenomycin F2 (TCM F2), a precursor of TCM C, from malonyl-CoA. TcmJ, while not absolutely required, greatly increases the tetracenomycin F2 production. It probably acts as a cyclase. The sequence is that of Tetracenomycin polyketide synthase protein TcmJ from Streptomyces glaucescens.